A 705-amino-acid polypeptide reads, in one-letter code: uncharacterized protein (705 aa).

A DNA-binding region (zn(2)-C6 fungal-type) is located at residues 24-52 (CHFCRVRKLKCDRVRPFCGSCSSRNRKQC).

It is found in the nucleus. This is an uncharacterized protein from Saccharomyces cerevisiae (strain ATCC 204508 / S288c) (Baker's yeast).